The following is a 166-amino-acid chain: Endoribonuclease YbeY (166 aa).

Zn(2+)-binding residues include His-132, His-136, and His-142.

The protein belongs to the endoribonuclease YbeY family. The cofactor is Zn(2+).

It is found in the cytoplasm. Single strand-specific metallo-endoribonuclease involved in late-stage 70S ribosome quality control and in maturation of the 3' terminus of the 16S rRNA. This Clostridium acetobutylicum (strain ATCC 824 / DSM 792 / JCM 1419 / IAM 19013 / LMG 5710 / NBRC 13948 / NRRL B-527 / VKM B-1787 / 2291 / W) protein is Endoribonuclease YbeY.